A 413-amino-acid polypeptide reads, in one-letter code: Gamma-glutamyl phosphate reductase (413 aa).

This sequence belongs to the gamma-glutamyl phosphate reductase family.

It localises to the cytoplasm. It catalyses the reaction L-glutamate 5-semialdehyde + phosphate + NADP(+) = L-glutamyl 5-phosphate + NADPH + H(+). The protein operates within amino-acid biosynthesis; L-proline biosynthesis; L-glutamate 5-semialdehyde from L-glutamate: step 2/2. Catalyzes the NADPH-dependent reduction of L-glutamate 5-phosphate into L-glutamate 5-semialdehyde and phosphate. The product spontaneously undergoes cyclization to form 1-pyrroline-5-carboxylate. In Salinispora tropica (strain ATCC BAA-916 / DSM 44818 / JCM 13857 / NBRC 105044 / CNB-440), this protein is Gamma-glutamyl phosphate reductase.